A 113-amino-acid chain; its full sequence is Carboxysome shell protein CcmK1 (113 aa).

The BMC domain occupies 4–90 (AVGMIETLGF…PHENLEYVLP (87 aa)).

It belongs to the bacterial microcompartments protein family. CcmK subfamily. In terms of assembly, homohexamer. Interacts preferentially with CcmK2 and CcmK4a rather than itself in vitro.

The protein localises to the carboxysome. Its function is as follows. One of the shell proteins of the carboxysome, a polyhedral inclusion where RuBisCO (ribulose bisphosphate carboxylase, rbcL-rbcS) is sequestered. Assembles into hexamers which make sheets that form the facets of the polyhedral carboxysome. The hexamer central pore probably regulates metabolite flux. The sequence is that of Carboxysome shell protein CcmK1 from Thermosynechococcus vestitus (strain NIES-2133 / IAM M-273 / BP-1).